The primary structure comprises 311 residues: Nuclear hormone receptor family member nhr-111 (311 aa).

A DNA-binding region (nuclear receptor) is located at residues 39-115 (ITLCAVCGDT…KGMNKNAVQP (77 aa)). 2 NR C4-type zinc fingers span residues 42-62 (CAVC…CFGC) and 78-98 (CWNG…CKSC). Positions 116 to 311 (ERTSHSYTVE…KACEIVISFL (196 aa)) constitute an NR LBD domain.

Belongs to the nuclear hormone receptor family.

The protein localises to the nucleus. In terms of biological role, orphan nuclear receptor. This Caenorhabditis elegans protein is Nuclear hormone receptor family member nhr-111 (nhr-111).